Consider the following 426-residue polypeptide: Phosphoribosylamine--glycine ligase (426 aa).

The ATP-grasp domain occupies Lys-113 to Thr-320. Leu-139 to Ser-200 contributes to the ATP binding site. Positions 290 and 292 each coordinate Mg(2+).

This sequence belongs to the GARS family. Mg(2+) serves as cofactor. Requires Mn(2+) as cofactor.

It carries out the reaction 5-phospho-beta-D-ribosylamine + glycine + ATP = N(1)-(5-phospho-beta-D-ribosyl)glycinamide + ADP + phosphate + H(+). Its pathway is purine metabolism; IMP biosynthesis via de novo pathway; N(1)-(5-phospho-D-ribosyl)glycinamide from 5-phospho-alpha-D-ribose 1-diphosphate: step 2/2. The protein is Phosphoribosylamine--glycine ligase of Leptospira interrogans serogroup Icterohaemorrhagiae serovar Lai (strain 56601).